The primary structure comprises 2325 residues: Protein sidekick homolog (2325 aa).

The first 26 residues, 1–26 (MRNRLLLIFYTTTVLWTIGYTQLVLG), serve as a signal peptide directing secretion. Residues 27 to 2019 (KPPIFQDGGS…IPDDPFYTTW (1993 aa)) are Extracellular-facing. Ig-like C2-type domains are found at residues 28–105 (PPIF…AAIS), 217–319 (PSLQ…AYMT), and 324–397 (PILK…ADLA). Cystine bridges form between Cys-52-Cys-94, Cys-247-Cys-301, and Cys-345-Cys-386. Residue Asn-407 is glycosylated (N-linked (GlcNAc...) asparagine). Ig-like C2-type domains are found at residues 456 to 544 (PSQK…VQVN) and 547 to 638 (SLIE…AMLQ). 2 disulfides stabilise this stretch: Cys-480–Cys-528 and Cys-568–Cys-622. Residues Asn-632, Asn-655, Asn-807, Asn-868, Asn-932, and Asn-1016 are each glycosylated (N-linked (GlcNAc...) asparagine). Fibronectin type-III domains lie at 645-751 (MPER…MPQQ), 756-853 (APRN…TSEG), 858-957 (APKN…TEED), 961-1055 (SVDE…VPPE), 1059-1154 (RPSM…TLQT), 1159-1254 (PSQR…TYES), 1259-1359 (SPRN…TMED), 1363-1457 (PPES…SSVR), 1463-1566 (APAP…TLPS), 1571-1671 (QPIS…VGYS), 1673-1775 (PKRN…DKPG), 1776-1872 (PVGI…SKDG), and 1873-2004 (PPPP…TEQL). Residues 1036 to 1059 (TRKGDGPVEETKFESGVPPELPGR) are disordered. A compositionally biased stretch (basic and acidic residues) spans 1037 to 1048 (RKGDGPVEETKF). Asn-1107 carries N-linked (GlcNAc...) asparagine glycosylation. The interval 1137–1161 (KGRGAPSEPSRSFETLQTNPDTPSQ) is disordered. Polar residues predominate over residues 1145-1161 (PSRSFETLQTNPDTPSQ). Residue Asn-1614 is glycosylated (N-linked (GlcNAc...) asparagine). 2 disordered regions span residues 1857–1884 (GEQR…ITSG) and 1918–1947 (PANG…ATST). Asn-1863 carries an N-linked (GlcNAc...) asparagine glycan. The segment covering 1935–1947 (AKSAAQTAAATST) has biased composition (low complexity). The helical transmembrane segment at 2020-2040 (WFMALVAMGAFVLIVIIIAIL) threads the bilayer. Over 2041–2325 (CVTGSSAKYR…NLTTGFSSFV (285 aa)) the chain is Cytoplasmic. Disordered regions lie at residues 2080 to 2113 (NMTR…SVLG), 2164 to 2187 (TAYV…PTRS), 2202 to 2226 (RGHI…LQQP), and 2285 to 2325 (ILTG…SSFV). Positions 2091–2100 (PGTTQSWVSD) are enriched in polar residues. The span at 2215–2226 (GSQPQGSPLQQP) shows a compositional bias: low complexity. Polar residues-rich tracts occupy residues 2294–2305 (AGRSSTTDSTSE) and 2313–2325 (ATPN…SSFV).

It belongs to the sidekick family.

Its subcellular location is the membrane. In terms of biological role, cell adhesion protein. This chain is Protein sidekick homolog (rig-4), found in Caenorhabditis elegans.